Consider the following 511-residue polypeptide: TNF receptor-associated factor family protein DDB_G0290931 (511 aa).

The segment at 27–67 (CPICFELIYKKSIYQCSSGHYACQECWEKSLEIKQECMICR) adopts an RING-type; degenerate zinc-finger fold. Positions 103–169 (IDGANQENED…RKLIKDEENG (67 aa)) form a coiled coil. A disordered region spans residues 107–159 (NQENEDEENEDEENEDDEDENEDEENGEDDEDKDEDEENENENEENKDEENEK). Residues 109–155 (ENEDEENEDEENEDDEDENEDEENGEDDEDKDEDEENENENEENKDE) show a composition bias toward acidic residues. 2 TRAF-type zinc fingers span residues 181-234 (RHIQ…QVQL) and 236-293 (NHYD…SELQ). Residues 324-358 (ELLLKEIEKSKITCSELQRKNDELSSLITEIDDNY) are a coiled coil. One can recognise an MATH domain in the interval 374–499 (GYTNKWIISN…DDKLTINIYV (126 aa)).

Belongs to the TNF receptor-associated factor family. A subfamily.

The protein localises to the cytoplasm. In terms of biological role, probable adapter protein and signal transducer that links members of the tumor necrosis factor receptor family to different signaling pathways by association with the receptor cytoplasmic domain and kinases. The protein is TNF receptor-associated factor family protein DDB_G0290931 of Dictyostelium discoideum (Social amoeba).